Consider the following 235-residue polypeptide: tRNA pseudouridine synthase B (235 aa).

D48 (nucleophile) is an active-site residue.

It belongs to the pseudouridine synthase TruB family. Type 1 subfamily.

It catalyses the reaction uridine(55) in tRNA = pseudouridine(55) in tRNA. Responsible for synthesis of pseudouridine from uracil-55 in the psi GC loop of transfer RNAs. This is tRNA pseudouridine synthase B from Phocaeicola vulgatus (strain ATCC 8482 / DSM 1447 / JCM 5826 / CCUG 4940 / NBRC 14291 / NCTC 11154) (Bacteroides vulgatus).